Consider the following 112-residue polypeptide: ATP synthase epsilon chain (112 aa).

It belongs to the ATPase epsilon chain family. As to quaternary structure, F-type ATPases have 2 components, CF(1) - the catalytic core - and CF(0) - the membrane proton channel. CF(1) has five subunits: alpha(3), beta(3), gamma(1), delta(1), epsilon(1). CF(0) has three main subunits: a, b and c.

The protein localises to the cell membrane. Its function is as follows. Produces ATP from ADP in the presence of a proton gradient across the membrane. The chain is ATP synthase epsilon chain from Rickettsia africae (strain ESF-5).